A 474-amino-acid chain; its full sequence is Aspartyl/glutamyl-tRNA(Asn/Gln) amidotransferase subunit B (474 aa).

The protein belongs to the GatB/GatE family. GatB subfamily. In terms of assembly, heterotrimer of A, B and C subunits.

It catalyses the reaction L-glutamyl-tRNA(Gln) + L-glutamine + ATP + H2O = L-glutaminyl-tRNA(Gln) + L-glutamate + ADP + phosphate + H(+). It carries out the reaction L-aspartyl-tRNA(Asn) + L-glutamine + ATP + H2O = L-asparaginyl-tRNA(Asn) + L-glutamate + ADP + phosphate + 2 H(+). Allows the formation of correctly charged Asn-tRNA(Asn) or Gln-tRNA(Gln) through the transamidation of misacylated Asp-tRNA(Asn) or Glu-tRNA(Gln) in organisms which lack either or both of asparaginyl-tRNA or glutaminyl-tRNA synthetases. The reaction takes place in the presence of glutamine and ATP through an activated phospho-Asp-tRNA(Asn) or phospho-Glu-tRNA(Gln). This chain is Aspartyl/glutamyl-tRNA(Asn/Gln) amidotransferase subunit B, found in Limosilactobacillus fermentum (strain NBRC 3956 / LMG 18251) (Lactobacillus fermentum).